A 760-amino-acid polypeptide reads, in one-letter code: Xaa-Pro dipeptidyl-peptidase (760 aa).

Residues Ser349, Asp469, and His499 each act as charge relay system in the active site.

Belongs to the peptidase S15 family. In terms of assembly, homodimer.

It is found in the cytoplasm. It carries out the reaction Hydrolyzes Xaa-Pro-|- bonds to release unblocked, N-terminal dipeptides from substrates including Ala-Pro-|-p-nitroanilide and (sequentially) Tyr-Pro-|-Phe-Pro-|-Gly-Pro-|-Ile.. Removes N-terminal dipeptides sequentially from polypeptides having unsubstituted N-termini provided that the penultimate residue is proline. The protein is Xaa-Pro dipeptidyl-peptidase of Streptococcus pyogenes serotype M18 (strain MGAS8232).